Consider the following 89-residue polypeptide: Putative defensin-like protein 254 (89 aa).

Residues M1–S20 form the signal peptide. Intrachain disulfides connect C31–C48 and C37–C55.

It belongs to the DEFL family.

The protein localises to the secreted. This is Putative defensin-like protein 254 from Arabidopsis thaliana (Mouse-ear cress).